The chain runs to 332 residues: Biotin synthase (332 aa).

The region spanning 53-282 (HFGKKVKLNM…TKEIRISGGR (230 aa)) is the Radical SAM core domain. Cys71, Cys75, and Cys78 together coordinate [4Fe-4S] cluster. [2Fe-2S] cluster-binding residues include Cys115, Cys147, Cys207, and Arg277.

This sequence belongs to the radical SAM superfamily. Biotin synthase family. As to quaternary structure, homodimer. The cofactor is [4Fe-4S] cluster. Requires [2Fe-2S] cluster as cofactor.

It carries out the reaction (4R,5S)-dethiobiotin + (sulfur carrier)-SH + 2 reduced [2Fe-2S]-[ferredoxin] + 2 S-adenosyl-L-methionine = (sulfur carrier)-H + biotin + 2 5'-deoxyadenosine + 2 L-methionine + 2 oxidized [2Fe-2S]-[ferredoxin]. It participates in cofactor biosynthesis; biotin biosynthesis; biotin from 7,8-diaminononanoate: step 2/2. Catalyzes the conversion of dethiobiotin (DTB) to biotin by the insertion of a sulfur atom into dethiobiotin via a radical-based mechanism. This is Biotin synthase from Bacillus cereus (strain ATCC 14579 / DSM 31 / CCUG 7414 / JCM 2152 / NBRC 15305 / NCIMB 9373 / NCTC 2599 / NRRL B-3711).